The following is a 251-amino-acid chain: Triosephosphate isomerase (251 aa).

A substrate-binding site is contributed by 9 to 11 (NWK). Catalysis depends on histidine 95, which acts as the Electrophile. Glutamate 167 serves as the catalytic Proton acceptor. Residues glycine 173, serine 212, and 233 to 234 (GG) each bind substrate.

It belongs to the triosephosphate isomerase family. In terms of assembly, homodimer.

The protein resides in the cytoplasm. The catalysed reaction is D-glyceraldehyde 3-phosphate = dihydroxyacetone phosphate. Its pathway is carbohydrate biosynthesis; gluconeogenesis. It functions in the pathway carbohydrate degradation; glycolysis; D-glyceraldehyde 3-phosphate from glycerone phosphate: step 1/1. Its function is as follows. Involved in the gluconeogenesis. Catalyzes stereospecifically the conversion of dihydroxyacetone phosphate (DHAP) to D-glyceraldehyde-3-phosphate (G3P). This is Triosephosphate isomerase from Pseudomonas fluorescens (strain ATCC BAA-477 / NRRL B-23932 / Pf-5).